The following is a 331-amino-acid chain: Ornithine carbamoyltransferase (331 aa).

Carbamoyl phosphate is bound by residues 55–58 (STRT), Q82, R106, and 133–136 (HPTQ). Residues N166, D230, and 234–235 (SM) each bind L-ornithine. Carbamoyl phosphate contacts are provided by residues 272–273 (CL) and R317.

This sequence belongs to the aspartate/ornithine carbamoyltransferase superfamily. OTCase family.

Its subcellular location is the cytoplasm. It carries out the reaction carbamoyl phosphate + L-ornithine = L-citrulline + phosphate + H(+). It participates in amino-acid biosynthesis; L-arginine biosynthesis; L-arginine from L-ornithine and carbamoyl phosphate: step 1/3. Functionally, reversibly catalyzes the transfer of the carbamoyl group from carbamoyl phosphate (CP) to the N(epsilon) atom of ornithine (ORN) to produce L-citrulline. The chain is Ornithine carbamoyltransferase from Neisseria gonorrhoeae (strain ATCC 700825 / FA 1090).